Reading from the N-terminus, the 814-residue chain is Rho GTPase-activating protein 44 (814 aa).

One can recognise a BAR domain in the interval 14–249; the sequence is QTVGRAEKTE…IKAQQEAWVE (236 aa). One can recognise a Rho-GAP domain in the interval 255-445; it reads KPLEEHLMIS…PIIQHADWFF (191 aa). Disordered stretches follow at residues 467 to 493, 528 to 769, and 784 to 814; these read ANYS…RPLS, RGSS…MSTD, and STLR…STAL. The segment covering 479–489 has biased composition (basic and acidic residues); it reads PADRRQPEQAR. Ser493 bears the Phosphoserine mark. 5 stretches are compositionally biased toward low complexity: residues 567 to 581, 598 to 612, 622 to 637, 684 to 704, and 741 to 752; these read SPAT…SGAS, SPGS…SIQG, PQPA…DQSP, SPYG…LSPA, and SVSLSASSPQST. The tract at residues 727-814 is interaction with BST2; it reads KPRQRPTLPP…SEEESESTAL (88 aa). Positions 790-805 are enriched in basic and acidic residues; it reads PLEHARRHSATDKRDS. Position 805 is a phosphoserine (Ser805). Residues 811-814 carry the PDZ-binding motif; that stretch reads STAL.

Interacts with BST2 (via cytoplasmic domain). Interacts (probably via PDZ-binding motif) with SHANK3 (via PDZ domain); the interaction takes place in dendritic spines and promotes GRIA1 exocytosis. In terms of tissue distribution, specifically expressed in brain (at protein level). Detected in olfactory bulb, cortex, hippocampus, diencephalon and cerebellum (at protein level). Expressed in hippocampal neurons (at protein level).

The protein localises to the cell projection. It is found in the dendritic spine. Its subcellular location is the recycling endosome. It localises to the presynapse. The protein resides in the dendrite. Functionally, GTPase-activating protein (GAP) that stimulates the GTPase activity of Rho-type GTPases. Thereby, controls Rho-type GTPases cycling between their active GTP-bound and inactive GDP-bound states. Acts as a GAP at least for CDC42 and RAC1. In neurons, is involved in dendritic spine formation and synaptic plasticity in a specific RAC1-GAP activity. Limits the initiation of exploratory dendritic filopodia. Recruited to actin-patches that seed filopodia, binds specifically to plasma membrane sections that are deformed inward by acto-myosin mediated contractile forces. Acts through GAP activity on RAC1 to reduce actin polymerization necessary for filopodia formation. In association with SHANK3, promotes GRIA1 exocytosis from recycling endosomes and spine morphological changes associated to long-term potentiation. The polypeptide is Rho GTPase-activating protein 44 (Mus musculus (Mouse)).